A 128-amino-acid polypeptide reads, in one-letter code: MIVRTLDECRNSERRIVSDNWESTRMLLKDDNMGFSFHITTIYEATETHIHYQNHLESVYCMSGEGEIEVVGGETYPIKPGTLYILDKHDEHYLRAYKYKEMVMACVFNPPITGAEVHDENGVYPLVD.

This sequence belongs to the ectoine synthase family.

It carries out the reaction (2S)-4-acetamido-2-aminobutanoate = L-ectoine + H2O. Its pathway is amine and polyamine biosynthesis; ectoine biosynthesis; L-ectoine from L-aspartate 4-semialdehyde: step 3/3. Catalyzes the circularization of gamma-N-acetyl-alpha,gamma-diaminobutyric acid (ADABA) to ectoine (1,4,5,6-tetrahydro-2-methyl-4-pyrimidine carboxylic acid), which is an excellent osmoprotectant. The protein is L-ectoine synthase of Vibrio atlanticus (strain LGP32) (Vibrio splendidus (strain Mel32)).